The chain runs to 1612 residues: DNA (cytosine-5)-methyltransferase PliMCI (1612 aa).

The 95-residue stretch at 7 to 101 (CDQVIPPNVR…NGDTKEEASS (95 aa)) folds into the DMAP1-binding domain. A disordered region spans residues 87–338 (TCSPVNGDTK…TAESKQPPLR (252 aa)). Residues 94–110 (DTKEEASSNGKDDEKAE) are compositionally biased toward basic and acidic residues. Residues 115–131 (NGTTSNGSTTNGSSGSS) are compositionally biased toward low complexity. Positions 132–142 (KANGHTNGGYV) are enriched in polar residues. Positions 143–154 (QSSSQEETGTSQ) are enriched in low complexity. 3 stretches are compositionally biased toward basic and acidic residues: residues 193 to 212 (VLGD…KKDV), 222 to 232 (EESATPDEKTL), and 260 to 289 (KKEE…KKEE). The segment at 626 to 672 (ASERKKRCGVCEICQAPDCGKCTACKDMIKFGGSGKAKQACKDRRCP) adopts a CXXC-type zinc-finger fold. Zn(2+)-binding residues include Cys-633, Cys-636, Cys-639, Cys-644, Cys-647, Cys-650, Cys-666, and Cys-671. A disordered region spans residues 677–708 (QEADENDIDEMDNSSNKENKDEKKAKKGRKLE). Residues 678 to 688 (EADENDIDEMD) are compositionally biased toward acidic residues. Basic and acidic residues predominate over residues 691–708 (SNKENKDEKKAKKGRKLE). BAH domains are found at residues 743–871 (EKIE…EDYE) and 967–1089 (NYRK…EDPP). Positions 1084–1121 (CFEDPPSKSRSTRMKGKGKGKGKGKAKGKIAVEKEEEK) are disordered. Residues 1093–1111 (RSTRMKGKGKGKGKGKAKG) are compositionally biased toward basic residues. The 460-residue stretch at 1131–1590 (LKCLDVFAGC…MEIKVCLQTK (460 aa)) folds into the SAM-dependent MTase C5-type domain. S-adenosyl-L-methionine-binding positions include 1142–1143 (GL), 1160–1161 (EK), 1182–1183 (DC), and Cys-1183. The active site involves Cys-1218. 2 residues coordinate S-adenosyl-L-methionine: Asn-1569 and Val-1571.

The protein belongs to the class I-like SAM-binding methyltransferase superfamily. C5-methyltransferase family.

Its subcellular location is the nucleus. It catalyses the reaction a 2'-deoxycytidine in DNA + S-adenosyl-L-methionine = a 5-methyl-2'-deoxycytidine in DNA + S-adenosyl-L-homocysteine + H(+). Its function is as follows. Methylates CpG residues. The chain is DNA (cytosine-5)-methyltransferase PliMCI (DNMT) from Paracentrotus lividus (Common sea urchin).